A 221-amino-acid polypeptide reads, in one-letter code: Lipoprotein-releasing system ATP-binding protein LolD (221 aa).

Residues 6-220 (LILKNISKHY…YKLKHRLLNI (215 aa)) form the ABC transporter domain. ATP is bound at residue 42–49 (GSSGSGKS).

This sequence belongs to the ABC transporter superfamily. Lipoprotein translocase (TC 3.A.1.125) family. In terms of assembly, the complex is composed of two ATP-binding proteins (LolD) and two transmembrane proteins (LolC and LolE).

The protein localises to the cell inner membrane. Functionally, part of the ABC transporter complex LolCDE involved in the translocation of mature outer membrane-directed lipoproteins, from the inner membrane to the periplasmic chaperone, LolA. Responsible for the formation of the LolA-lipoprotein complex in an ATP-dependent manner. The protein is Lipoprotein-releasing system ATP-binding protein LolD of Rickettsia conorii (strain ATCC VR-613 / Malish 7).